A 279-amino-acid chain; its full sequence is Secreted RxLR effector protein 152 (279 aa).

Positions Met1–Ala22 are cleaved as a signal peptide. A RxLR-dEER motif is present at residues Arg47 to Arg62.

This sequence belongs to the RxLR effector family.

It localises to the secreted. The protein localises to the host nucleus. Secreted effector that completely suppresses the host cell death induced by cell death-inducing proteins. The chain is Secreted RxLR effector protein 152 from Plasmopara viticola (Downy mildew of grapevine).